Consider the following 223-residue polypeptide: Alpha-enolase (223 aa).

Serine 8 provides a ligand contact to Mg(2+). Tyrosine 12 is subject to Phosphotyrosine. N6-acetyllysine is present on lysine 25. Position 39 (glutamate 39) interacts with substrate. Lysine 61 is subject to N6-acetyllysine. The active-site Proton donor is glutamate 69. Lysine 87 carries the post-translational modification N6-acetyllysine; alternate. At lysine 87 the chain carries N6-malonyllysine; alternate. Lysine 87 carries the post-translational modification N6-succinyllysine; alternate. Residues aspartate 99 and aspartate 119 each coordinate Mg(2+). Residue aspartate 119 participates in substrate binding. 2 positions are modified to N6-acetyllysine: lysine 133 and lysine 141. The Proton acceptor role is filled by lysine 141. Residues 168–171 (SHRS) and lysine 192 each bind substrate. Positions 202–223 (YNQILRIEEELGSKSFRNPLAK) are required for interaction with PLG. At lysine 215 the chain carries N6-acetyllysine; alternate. Lysine 215 carries the N6-malonyllysine; alternate modification. N6-succinyllysine; alternate is present on lysine 215.

This sequence belongs to the enolase family. In terms of assembly, mammalian enolase is composed of 3 isozyme subunits, alpha, beta and gamma, which can form homodimers or heterodimers which are cell-type and development-specific. ENO1 interacts with PLG in the neuronal plasma membrane and promotes its activation. The C-terminal lysine is required for this binding. Interacts with ENO4 and PGAM2. Interacts with CMTM6. Mg(2+) serves as cofactor. In terms of processing, ISGylated. Lysine 2-hydroxyisobutyrylation (Khib) by p300/EP300 activates the phosphopyruvate hydratase activity.

It localises to the cytoplasm. The protein resides in the cell membrane. The enzyme catalyses (2R)-2-phosphoglycerate = phosphoenolpyruvate + H2O. The protein operates within carbohydrate degradation; glycolysis; pyruvate from D-glyceraldehyde 3-phosphate: step 4/5. Glycolytic enzyme the catalyzes the conversion of 2-phosphoglycerate to phosphoenolpyruvate. In addition to glycolysis, involved in various processes such as growth control, hypoxia tolerance and allergic responses. May also function in the intravascular and pericellular fibrinolytic system due to its ability to serve as a receptor and activator of plasminogen on the cell surface of several cell-types such as leukocytes and neurons. Stimulates immunoglobulin production. This is Alpha-enolase from Mesocricetus auratus (Golden hamster).